Consider the following 215-residue polypeptide: Large ribosomal subunit protein uL3c (215 aa).

Residues 132–151 (RGAMSHGSKSHRRPGSIGAG) are disordered.

Belongs to the universal ribosomal protein uL3 family. As to quaternary structure, part of the 50S ribosomal subunit.

The protein localises to the plastid. The protein resides in the chloroplast. Functionally, one of the primary rRNA binding proteins, it binds directly near the 3'-end of the 23S rRNA, where it nucleates assembly of the 50S subunit. This chain is Large ribosomal subunit protein uL3c (rpl3), found in Cyanidium caldarium (Red alga).